Here is a 962-residue protein sequence, read N- to C-terminus: Splicing regulator ARVCF (962 aa).

Residues 8 to 46 (SAASILASVKEQEARFERLTRALEQERRHVALQLERAQQ) are a coiled coil. The interval 95–122 (TVEEDPGTPTSHVSIVTSEDGTTRRTET) is disordered. Thr-102 and Thr-104 each carry phosphothreonine. The segment covering 102 to 114 (TPTSHVSIVTSED) has biased composition (polar residues). The residue at position 170 (Arg-170) is an Omega-N-methylarginine. Disordered stretches follow at residues 186 to 253 (GGGF…LPER) and 266 to 290 (RSLA…RRRP). The span at 206 to 217 (RGLGMRPPRAGP) shows a compositional bias: low complexity. Ser-267 carries the phosphoserine modification. A compositionally biased stretch (acidic residues) spans 270-280 (ADDEGGPELEP). Phosphoserine is present on residues Ser-332, Ser-335, Ser-343, and Ser-345. ARM repeat units lie at residues 348–387 (SARK…HLCF), 390–429 (EGVK…NLSY), 433–467 (TDNK…VTGT), 468–508 (LWNL…NEDS), 526–565 (LRNV…DTDN), and 575–622 (MRNL…GKKA). The disordered stretch occupies residues 590–614 (DRYQEAEPGPLGSAVGSQRRRRDDA). Position 606 is a phosphoserine (Ser-606). The short motif at 607–623 (QRRRRDDASCFGGKKAK) is the Nuclear localization signal element. Thr-642 carries the post-translational modification Phosphothreonine. ARM repeat units follow at residues 646–686 (PKRT…AAGA), 699–738 (TYIR…NLSL), 739–781 (DRRN…AVLN), and 782–826 (TIHE…SHVL). The interval 776 to 962 (VVAVLNTIHE…AKPQPVDSWV (187 aa)) is required for interaction with RNA-binding proteins DDX5, HNRNPH2 and SRSF1 and with mRNAs. The segment at 854–962 (ATAKGPKGAL…AKPQPVDSWV (109 aa)) is disordered. 2 positions are modified to phosphoserine: Ser-864 and Ser-871. Residue Thr-872 is modified to Phosphothreonine. The segment covering 878-887 (KSLEGEKTGS) has biased composition (basic and acidic residues). Ser-915 is subject to Phosphoserine. Basic and acidic residues predominate over residues 920–932 (ASEKEPLKLDPSR).

It belongs to the beta-catenin family. As to quaternary structure, component of a ribonucleoprotein complex containing mRNAs and RNA-binding proteins including DDX5, HNRNPH2 and SRSF1 as well as ARVCF. Interacts (via the extreme C-terminus) with FRMPD2 (via the PDZ 2 domain). Interacts with CCDC85B. In terms of tissue distribution, found in all the examined tissues including heart, brain, liver and kidney. Found at low level in lung. Expressed in dermal connective tissue, salivary gland duct and in the corneal layer (at protein level). Expressed in arrector pili muscle (at protein level). High levels detected in epithelial cells with lower levels found in fibroblasts and T lymphocytes.

The protein resides in the cell junction. It is found in the adherens junction. The protein localises to the nucleus. It localises to the cytoplasm. In terms of biological role, contributes to the regulation of alternative splicing of pre-mRNAs. The chain is Splicing regulator ARVCF from Homo sapiens (Human).